Consider the following 382-residue polypeptide: 3-dehydroquinate synthase (382 aa).

NAD(+)-binding positions include 115–119 (GVVGD), 139–140 (TS), Lys-152, and Lys-161. Residues Glu-194, His-256, and His-274 each coordinate Zn(2+).

This sequence belongs to the sugar phosphate cyclases superfamily. Dehydroquinate synthase family. It depends on Co(2+) as a cofactor. Requires Zn(2+) as cofactor. The cofactor is NAD(+).

The protein localises to the cytoplasm. The enzyme catalyses 7-phospho-2-dehydro-3-deoxy-D-arabino-heptonate = 3-dehydroquinate + phosphate. The protein operates within metabolic intermediate biosynthesis; chorismate biosynthesis; chorismate from D-erythrose 4-phosphate and phosphoenolpyruvate: step 2/7. In terms of biological role, catalyzes the conversion of 3-deoxy-D-arabino-heptulosonate 7-phosphate (DAHP) to dehydroquinate (DHQ). This chain is 3-dehydroquinate synthase, found in Rhodopseudomonas palustris (strain BisB18).